A 344-amino-acid chain; its full sequence is MRNPNEIVAEALAAIHGCPDLPSLEQIKAGYLGKSGQLTELLKSLGAMPADARKTAGARINEAKQAVEAALKIRREALQQAELDRQLAAETLDVTLPGRGLGTAGVHPVSRTLARIEALFHSIGFDVATGPEIETDFYNFTALNIPEDHPARAMHDTFYLRQNNAGGGELLRTHTSPVQIRHMQTHEPPLRIIAPGRVYRCDSDVTHTPMFHQIEGLWVDESVSFADLKGVLADFMRNFFERDDLAVRFRPSFFPFTEPSAEMDIGCVMCGGSGCRVCSHTGWLEVLGCGMVHPNVFRHVGVDAERFIGFAFGLGVERLAMLRYGVDDLRLFFENDLRFLKQFN.

Glu258 is a binding site for Mg(2+).

The protein belongs to the class-II aminoacyl-tRNA synthetase family. Phe-tRNA synthetase alpha subunit type 1 subfamily. In terms of assembly, tetramer of two alpha and two beta subunits. It depends on Mg(2+) as a cofactor.

The protein localises to the cytoplasm. The enzyme catalyses tRNA(Phe) + L-phenylalanine + ATP = L-phenylalanyl-tRNA(Phe) + AMP + diphosphate + H(+). The sequence is that of Phenylalanine--tRNA ligase alpha subunit from Thiobacillus denitrificans (strain ATCC 25259 / T1).